We begin with the raw amino-acid sequence, 231 residues long: LexA repressor (231 aa).

The segment at residues 28–48 is a DNA-binding region (H-T-H motif); the sequence is IREIGEALDIRSTNGVNDHLK. Active-site for autocatalytic cleavage activity residues include Ser-149 and Lys-186.

This sequence belongs to the peptidase S24 family. Homodimer.

It carries out the reaction Hydrolysis of Ala-|-Gly bond in repressor LexA.. Functionally, represses a number of genes involved in the response to DNA damage (SOS response), including recA and lexA. In the presence of single-stranded DNA, RecA interacts with LexA causing an autocatalytic cleavage which disrupts the DNA-binding part of LexA, leading to derepression of the SOS regulon and eventually DNA repair. The polypeptide is LexA repressor (Anaeromyxobacter sp. (strain Fw109-5)).